We begin with the raw amino-acid sequence, 364 residues long: Phosrestin-2 (364 aa).

Belongs to the arrestin family. Post-translationally, phosphorylated, but does not undergo light-induced phosphorylation. In terms of tissue distribution, expressed specifically and abundantly in photoreceptor cells in retina and ocelli.

Its subcellular location is the cell projection. It is found in the rhabdomere. Regulates photoreceptor cell deactivation. Arr1 and Arr2 proteins are mediators of rhodopsin inactivation and are essential for the termination of the phototransduction cascade. Involved in regulating normal cycles of per nuclear accumulation in brain circadian neurons and thus is important for normal circadian behavior. In the dark, functions with Arr2 to promote the formation of cytosolic Bdbt foci, which are required for dco localization to photoreceptor nuclei where it phosphorylates and activates degradation of per. This is Phosrestin-2 (Arr1) from Drosophila melanogaster (Fruit fly).